Here is a 560-residue protein sequence, read N- to C-terminus: Mannosyl-oligosaccharide 1,2-alpha-mannosidase MNS1 (560 aa).

The Cytoplasmic portion of the chain corresponds to 1–27; sequence MARSRSISGYGIWKYLNPAYYLRRPRR. Residues 28–47 form a helical; Signal-anchor for type II membrane protein membrane-spanning segment; sequence LALLFIVFVSVSMLVWDRIN. Residues 47-80 adopt a coiled-coil conformation; that stretch reads NLAREHEVEVFKLNEEVSRLEQMLEELNGGVGNK. Over 48–560 the chain is Lumenal; it reads LAREHEVEVF…QRKFGHQINV (513 aa). Residue Glu179 is the Proton donor of the active site. Asp312 is an active-site residue. Residue Asn326 is glycosylated (N-linked (GlcNAc...) asparagine). Cysteines 377 and 409 form a disulfide. The active-site Proton donor is Glu423. Residue Glu445 is part of the active site. A glycan (N-linked (GlcNAc...) asparagine) is linked at Asn459. Thr529 provides a ligand contact to Ca(2+).

This sequence belongs to the glycosyl hydrolase 47 family. Ca(2+) serves as cofactor. Mn(2+) is required as a cofactor. It depends on Mg(2+) as a cofactor. In terms of tissue distribution, expressed in flowers, siliques, stems, leaves, roots, pollen grains, shoot apical meristems, hypocotyls and upper region of the root.

Its subcellular location is the golgi apparatus membrane. The catalysed reaction is N(4)-(alpha-D-Man-(1-&gt;2)-alpha-D-Man-(1-&gt;2)-alpha-D-Man-(1-&gt;3)-[alpha-D-Man-(1-&gt;2)-alpha-D-Man-(1-&gt;3)-[alpha-D-Man-(1-&gt;2)-alpha-D-Man-(1-&gt;6)]-alpha-D-Man-(1-&gt;6)]-beta-D-Man-(1-&gt;4)-beta-D-GlcNAc-(1-&gt;4)-beta-D-GlcNAc)-L-asparaginyl-[protein] (N-glucan mannose isomer 9A1,2,3B1,2,3) + 4 H2O = N(4)-(alpha-D-Man-(1-&gt;3)-[alpha-D-Man-(1-&gt;3)-[alpha-D-Man-(1-&gt;6)]-alpha-D-Man-(1-&gt;6)]-beta-D-Man-(1-&gt;4)-beta-D-GlcNAc-(1-&gt;4)-beta-D-GlcNAc)-L-asparaginyl-[protein] (N-glucan mannose isomer 5A1,2) + 4 beta-D-mannose. It carries out the reaction N(4)-(alpha-D-Man-(1-&gt;2)-alpha-D-Man-(1-&gt;2)-alpha-D-Man-(1-&gt;3)-[alpha-D-Man-(1-&gt;3)-[alpha-D-Man-(1-&gt;2)-alpha-D-Man-(1-&gt;6)]-alpha-D-Man-(1-&gt;6)]-beta-D-Man-(1-&gt;4)-beta-D-GlcNAc-(1-&gt;4)-beta-D-GlcNAc)-L-asparaginyl-[protein] (N-glucan mannose isomer 8A1,2,3B1,3) + 3 H2O = N(4)-(alpha-D-Man-(1-&gt;3)-[alpha-D-Man-(1-&gt;3)-[alpha-D-Man-(1-&gt;6)]-alpha-D-Man-(1-&gt;6)]-beta-D-Man-(1-&gt;4)-beta-D-GlcNAc-(1-&gt;4)-beta-D-GlcNAc)-L-asparaginyl-[protein] (N-glucan mannose isomer 5A1,2) + 3 beta-D-mannose. The enzyme catalyses N(4)-(alpha-D-Man-(1-&gt;2)-alpha-D-Man-(1-&gt;2)-alpha-D-Man-(1-&gt;3)-[alpha-D-Man-(1-&gt;2)-alpha-D-Man-(1-&gt;3)-[alpha-D-Man-(1-&gt;2)-alpha-D-Man-(1-&gt;6)]-alpha-D-Man-(1-&gt;6)]-beta-D-Man-(1-&gt;4)-beta-D-GlcNAc-(1-&gt;4)-beta-D-GlcNAc)-L-asparaginyl-[protein] (N-glucan mannose isomer 9A1,2,3B1,2,3) + H2O = N(4)-(alpha-D-Man-(1-&gt;2)-alpha-D-Man-(1-&gt;2)-alpha-D-Man-(1-&gt;3)-[alpha-D-Man-(1-&gt;3)-[alpha-D-Man-(1-&gt;2)-alpha-D-Man-(1-&gt;6)]-alpha-D-Man-(1-&gt;6)]-beta-D-Man-(1-&gt;4)-beta-D-GlcNAc-(1-&gt;4)-beta-D-GlcNAc)-L-asparaginyl-[protein] (N-glucan mannose isomer 8A1,2,3B1,3) + beta-D-mannose. It functions in the pathway protein modification; protein glycosylation. Its activity is regulated as follows. Inhibited by kifunensine and 1-deoxymannojirimycin, but not by swainsonine. Its function is as follows. Class I alpha-mannosidase essential for early N-glycan processing. Progressively trims alpha-1,2-linked mannose residues. Produces Man(5)GlcNAc(2) from Man(8)GlcNAc(2), but only Man(6)GlcNAc(2) from Man(9)GlcNAc(2). Has difficulty acting on the terminal mannose of the b-branch. Involved in root development and cell wall biosynthesis. This Arabidopsis thaliana (Mouse-ear cress) protein is Mannosyl-oligosaccharide 1,2-alpha-mannosidase MNS1 (MNS1).